The sequence spans 278 residues: NAD kinase (278 aa).

Asp67 functions as the Proton acceptor in the catalytic mechanism. NAD(+) is bound by residues 67-68 (DG), Arg72, 137-138 (NE), Lys148, Arg165, Asp167, 178-183 (TGYALS), and Gln237.

It belongs to the NAD kinase family. It depends on a divalent metal cation as a cofactor.

It localises to the cytoplasm. It catalyses the reaction NAD(+) + ATP = ADP + NADP(+) + H(+). Involved in the regulation of the intracellular balance of NAD and NADP, and is a key enzyme in the biosynthesis of NADP. Catalyzes specifically the phosphorylation on 2'-hydroxyl of the adenosine moiety of NAD to yield NADP. This chain is NAD kinase, found in Thermococcus gammatolerans (strain DSM 15229 / JCM 11827 / EJ3).